The chain runs to 102 residues: Small ribosomal subunit protein uS10 (102 aa).

It belongs to the universal ribosomal protein uS10 family. As to quaternary structure, part of the 30S ribosomal subunit.

In terms of biological role, involved in the binding of tRNA to the ribosomes. This is Small ribosomal subunit protein uS10 from Geobacillus kaustophilus (strain HTA426).